A 332-amino-acid chain; its full sequence is Small ribosomal subunit biogenesis GTPase RsgA (332 aa).

In terms of domain architecture, CP-type G spans 103 to 259 (RQQLIAANLD…LIDTPGMREL (157 aa)). GTP is bound by residues 148 to 151 (TKVD) and 201 to 209 (GSSGAGKST). Positions 281, 286, 288, and 294 each coordinate Zn(2+).

Belongs to the TRAFAC class YlqF/YawG GTPase family. RsgA subfamily. As to quaternary structure, monomer. Associates with 30S ribosomal subunit, binds 16S rRNA. Zn(2+) serves as cofactor.

It is found in the cytoplasm. Its function is as follows. One of several proteins that assist in the late maturation steps of the functional core of the 30S ribosomal subunit. Helps release RbfA from mature subunits. May play a role in the assembly of ribosomal proteins into the subunit. Circularly permuted GTPase that catalyzes slow GTP hydrolysis, GTPase activity is stimulated by the 30S ribosomal subunit. The sequence is that of Small ribosomal subunit biogenesis GTPase RsgA from Xylella fastidiosa (strain M12).